A 160-amino-acid chain; its full sequence is Cytochrome b6-f complex subunit 4 (160 aa).

The next 3 helical transmembrane spans lie at 36–56 (ILYM…GLAI), 95–115 (LLGI…PFIE), and 127–147 (PIAM…GAGA).

It belongs to the cytochrome b family. PetD subfamily. As to quaternary structure, the 4 large subunits of the cytochrome b6-f complex are cytochrome b6, subunit IV (17 kDa polypeptide, PetD), cytochrome f and the Rieske protein, while the 4 small subunits are PetG, PetL, PetM and PetN. The complex functions as a dimer.

It localises to the cellular thylakoid membrane. Functionally, component of the cytochrome b6-f complex, which mediates electron transfer between photosystem II (PSII) and photosystem I (PSI), cyclic electron flow around PSI, and state transitions. The polypeptide is Cytochrome b6-f complex subunit 4 (Synechocystis sp. (strain ATCC 27184 / PCC 6803 / Kazusa)).